The sequence spans 720 residues: Photosystem I P700 chlorophyll a apoprotein A1 (720 aa).

The next 8 helical transmembrane spans lie at 62 to 85 (IFSAHFGQLAIIFIWLSGMYFHGA), 148 to 171 (LYCTAIGGLIFAALMLFAGWFHYH), 186 to 210 (LNHHLAGLLGLGSLSWAGHQVHVSL), 282 to 300 (IVHHHLAIAVIFLIAGHMY), 337 to 360 (WHAQLALNLAILGSLTIVVAHHMY), 376 to 402 (LSLFTHHMWIGGFVIIGAAAHAAIFLV), 424 to 446 (AIISHLNWTCIFLGFHSFGLYIH), and 522 to 540 (FLVHHIHAFTIHVTVLILL). The [4Fe-4S] cluster site is built by Cys564 and Cys573. A run of 2 helical transmembrane segments spans residues 580–601 (HVFLGLFWMYNAISVVIFHFSW) and 655–677 (LSAYGLFFLGAHFVWAFSLMFLF). Chlorophyll a' is bound at residue His666. Chlorophyll a is bound by residues Met674 and Tyr682. Phylloquinone is bound at residue Trp683. A helical transmembrane segment spans residues 715–720 (AVGVAH).

The protein belongs to the PsaA/PsaB family. In terms of assembly, the PsaA/B heterodimer binds the P700 chlorophyll special pair and subsequent electron acceptors. PSI consists of a core antenna complex that captures photons, and an electron transfer chain that converts photonic excitation into a charge separation. The eukaryotic PSI reaction center is composed of at least 11 subunits. P700 is a chlorophyll a/chlorophyll a' dimer, A0 is one or more chlorophyll a, A1 is one or both phylloquinones and FX is a shared 4Fe-4S iron-sulfur center. is required as a cofactor.

Its subcellular location is the plastid. It is found in the chloroplast thylakoid membrane. It carries out the reaction reduced [plastocyanin] + hnu + oxidized [2Fe-2S]-[ferredoxin] = oxidized [plastocyanin] + reduced [2Fe-2S]-[ferredoxin]. In terms of biological role, psaA and PsaB bind P700, the primary electron donor of photosystem I (PSI), as well as the electron acceptors A0, A1 and FX. PSI is a plastocyanin-ferredoxin oxidoreductase, converting photonic excitation into a charge separation, which transfers an electron from the donor P700 chlorophyll pair to the spectroscopically characterized acceptors A0, A1, FX, FA and FB in turn. Oxidized P700 is reduced on the lumenal side of the thylakoid membrane by plastocyanin. The polypeptide is Photosystem I P700 chlorophyll a apoprotein A1 (Ephedra tweediana (Vining horsetail)).